The primary structure comprises 278 residues: HAUS augmin-like complex subunit 1 (278 aa).

3 coiled-coil regions span residues 49–79 (RDVYLVIEDLKQKASEYESEAKYLQDLLMES), 124–177 (SDLF…KVDN), and 249–277 (SLAQVKIEEAKRELDSIEAELTRRVDMME).

The protein belongs to the HAUS1 family. In terms of assembly, component of the HAUS augmin-like complex. The complex interacts with the gamma-tubulin ring complex and this interaction is required for spindle assembly. Associates with microtubules. The interaction with microtubules is strong during mitosis, while it is weak or absent during interphase. It is unclear whether this interaction is direct or indirect. Interacts with EML3 (phosphorylated at 'Thr-881'). Widely expressed. Expressed in pancreas, kidney, skeletal muscle, liver and heart. Weakly expressed in lung, brain and placenta.

The protein localises to the cytoplasm. It localises to the cytoskeleton. The protein resides in the microtubule organizing center. Its subcellular location is the centrosome. It is found in the spindle. The protein localises to the spindle pole. Contributes to mitotic spindle assembly, maintenance of centrosome integrity and completion of cytokinesis as part of the HAUS augmin-like complex. The sequence is that of HAUS augmin-like complex subunit 1 (HAUS1) from Homo sapiens (Human).